The sequence spans 430 residues: Enolase (430 aa).

Gln-167 lines the (2R)-2-phosphoglycerate pocket. Glu-209 acts as the Proton donor in catalysis. 3 residues coordinate Mg(2+): Asp-245, Glu-286, and Asp-313. Residues Lys-338, Arg-367, Ser-368, and Lys-389 each coordinate (2R)-2-phosphoglycerate. The active-site Proton acceptor is Lys-338.

This sequence belongs to the enolase family. The cofactor is Mg(2+).

The protein resides in the cytoplasm. It is found in the secreted. It localises to the cell surface. The enzyme catalyses (2R)-2-phosphoglycerate = phosphoenolpyruvate + H2O. Its pathway is carbohydrate degradation; glycolysis; pyruvate from D-glyceraldehyde 3-phosphate: step 4/5. In terms of biological role, catalyzes the reversible conversion of 2-phosphoglycerate (2-PG) into phosphoenolpyruvate (PEP). It is essential for the degradation of carbohydrates via glycolysis. This Parasynechococcus marenigrum (strain WH8102) protein is Enolase.